We begin with the raw amino-acid sequence, 311 residues long: Probable manganese-dependent inorganic pyrophosphatase (311 aa).

6 residues coordinate Mn(2+): His9, Asp13, Asp15, Asp75, His97, and Asp149.

The protein belongs to the PPase class C family. It depends on Mn(2+) as a cofactor.

It is found in the cytoplasm. The catalysed reaction is diphosphate + H2O = 2 phosphate + H(+). This is Probable manganese-dependent inorganic pyrophosphatase from Lactobacillus acidophilus (strain ATCC 700396 / NCK56 / N2 / NCFM).